Reading from the N-terminus, the 230-residue chain is Preflagellin peptidase (230 aa).

A topological domain (cytoplasmic) is located at residue Met-1. The chain crosses the membrane as a helical span at residues 2–18 (IEYIIGALGLIIASVQD). Residues 19–23 (FRSRE) are Extracellular-facing. The chain crosses the membrane as a helical span at residues 24–46 (IEDYIWIFLAVFGVLFAIYSSIT). At 47–49 (LLD) the chain is on the cytoplasmic side. A helical transmembrane segment spans residues 50 to 72 (YSILINSISGFVICFILGYMMFL). Topologically, residues 73–78 (SGIGGG) are extracellular. The helical transmembrane segment at 79 to 89 (DGKMLIGLGAL) threads the bilayer. At 90 to 110 (VPKFQMPIYTSLGTLLNLNYV) the chain is on the cytoplasmic side. Residues 111-139 (PTFPIMVFINGIFFMVFLPFVILFRNILN) traverse the membrane as a helical segment. The Extracellular segment spans residues 140 to 204 (GARPKTGKEF…EEIWVTPQIP (65 aa)). A helical membrane pass occupies residues 205 to 216 (LIIPITLSYLVT). The Cytoplasmic portion of the chain corresponds to 217-230 (PIIGDRILDFLIPF).

The protein belongs to the peptidase A24 family. Archaeal preflagellin peptidase subfamily.

The protein resides in the cell membrane. The catalysed reaction is Cleaves the signal peptide of 3 to 12 amino acids from the N-terminal of preflagellin, usually at Arg-Gly-|- or Lys-Gly-|-, to release flagellin.. Its function is as follows. Cleaves the N-terminal leader peptide from preflagellins. This Methanococcus maripaludis (strain C6 / ATCC BAA-1332) protein is Preflagellin peptidase (flaK).